A 274-amino-acid chain; its full sequence is NAD kinase (274 aa).

Catalysis depends on D50, which acts as the Proton acceptor. NAD(+)-binding positions include 50 to 51 (DG), 126 to 127 (NE), R152, D154, 165 to 170 (TAYNKS), and A189.

It belongs to the NAD kinase family. Requires a divalent metal cation as cofactor.

The protein localises to the cytoplasm. It catalyses the reaction NAD(+) + ATP = ADP + NADP(+) + H(+). Its function is as follows. Involved in the regulation of the intracellular balance of NAD and NADP, and is a key enzyme in the biosynthesis of NADP. Catalyzes specifically the phosphorylation on 2'-hydroxyl of the adenosine moiety of NAD to yield NADP. In Streptococcus gordonii (strain Challis / ATCC 35105 / BCRC 15272 / CH1 / DL1 / V288), this protein is NAD kinase.